Consider the following 64-residue polypeptide: MNQNGSQIHSDGNGHSDDTDTPGVSAGQVSVNTAGVDDLLDEIDGLLESNAEEFVRSYVQKGGQ.

A compositionally biased stretch (polar residues) spans 1–10 (MNQNGSQIHS). The disordered stretch occupies residues 1–32 (MNQNGSQIHSDGNGHSDDTDTPGVSAGQVSVN). Residues 20 to 58 (DTPGVSAGQVSVNTAGVDDLLDEIDGLLESNAEEFVRSY) form an ARC ATPase binding region. Residue Gln-64 is modified to Deamidated glutamine. An Isoglutamyl lysine isopeptide (Gln-Lys) (interchain with K-? in acceptor proteins) cross-link involves residue Gln-64.

This sequence belongs to the prokaryotic ubiquitin-like protein family. As to quaternary structure, strongly interacts with the proteasome-associated ATPase ARC through a hydrophobic interface; the interacting region of Pup lies in its C-terminal half. There is one Pup binding site per ARC hexamer ring. Post-translationally, is modified by deamidation of its C-terminal glutamine to glutamate by the deamidase Dop, a prerequisite to the subsequent pupylation process.

It participates in protein degradation; proteasomal Pup-dependent pathway. Its function is as follows. Protein modifier that is covalently attached to lysine residues of substrate proteins, thereby targeting them for proteasomal degradation. The tagging system is termed pupylation. The chain is Prokaryotic ubiquitin-like protein Pup from Corynebacterium diphtheriae (strain ATCC 700971 / NCTC 13129 / Biotype gravis).